Consider the following 490-residue polypeptide: Vacuolar amino acid transporter 7 (490 aa).

Residues 1 to 6 are Cytoplasmic-facing; the sequence is MEATSS. A helical membrane pass occupies residues 7–27; it reads ALSSTANLVKTIVGAGTLAIP. The Vacuolar portion of the chain corresponds to 28–34; the sequence is YSFKSDG. The chain crosses the membrane as a helical span at residues 35–55; the sequence is VLVGVILTLLAAVTSGLGLFV. Residues 56–84 lie on the Cytoplasmic side of the membrane; that stretch reads LSKCSKTLINPRNSSFFTLCMLTYPTLAP. Residues 85 to 105 form a helical membrane-spanning segment; it reads IFDLAMIVQCFGVGLSYLVLI. At 106-108 the chain is on the vacuolar side; it reads GDL. A helical membrane pass occupies residues 109-129; the sequence is FPGLFGGERNYWIIASAVIII. Residues 130 to 143 lie on the Cytoplasmic side of the membrane; it reads PLCLVKKLDQLKYS. A helical transmembrane segment spans residues 144-164; that stretch reads SILGLFALAYISILVFSHFVF. At 165–190 the chain is on the vacuolar side; it reads ELGKGELTNILRNDICWWKIHDFKGL. Residues 191–211 form a helical membrane-spanning segment; sequence LSTFSIIIFAFTGSMNLFPMI. Residues 212–221 are Cytoplasmic-facing; that stretch reads NELKDNSMEN. A helical transmembrane segment spans residues 222-242; sequence ITFVINNSISLSTALFLIVGL. At 243 to 264 the chain is on the vacuolar side; sequence SGYLTFGNETLGNLMLNYDPNS. A helical transmembrane segment spans residues 265-285; that stretch reads IWIVIGKFCLGSMLILSFPLL. At 286-397 the chain is on the cytoplasmic side; the sequence is FHPLRIAVNN…FVKSRFYWIT (112 aa). The disordered stretch occupies residues 355 to 374; that stretch reads NGNFDNGSIESQENNNDERG. The segment covering 357–368 has biased composition (polar residues); the sequence is NFDNGSIESQEN. A helical membrane pass occupies residues 398-418; sequence ALLLISMYTLALSVQSFALVL. Residues 419–428 lie on the Vacuolar side of the membrane; the sequence is SFVGATGSTS. Residues 429–449 form a helical membrane-spanning segment; that stretch reads ISFTLPGLLGYKLIGLDSLAI. At 450-463 the chain is on the cytoplasmic side; the sequence is GKMIPPKDRFYKRC. A helical transmembrane segment spans residues 464-484; the sequence is SLLLVFYGLSVMFLSLYVTVF. Residues 485–490 are Vacuolar-facing; it reads NRSDEA.

Belongs to the amino acid/polyamine transporter 2 family.

Its subcellular location is the vacuole membrane. In terms of biological role, probable amino acid transporter of unknown specificity. The protein is Vacuolar amino acid transporter 7 (AVT7) of Saccharomyces cerevisiae (strain ATCC 204508 / S288c) (Baker's yeast).